Consider the following 60-residue polypeptide: Ferredoxin (60 aa).

4Fe-4S ferredoxin-type domains are found at residues 2 to 29 (KVRV…LGDD) and 30 to 60 (GKAK…SVEE). [4Fe-4S] cluster is bound by residues Cys-10, Cys-13, and Cys-16. Cys-20 and Cys-43 form a disulfide bridge. Position 51 (Cys-51) interacts with [4Fe-4S] cluster.

Monomer. It depends on [4Fe-4S] cluster as a cofactor.

Functionally, ferredoxins are iron-sulfur proteins that transfer electrons in a wide variety of metabolic reactions. In Thermotoga maritima (strain ATCC 43589 / DSM 3109 / JCM 10099 / NBRC 100826 / MSB8), this protein is Ferredoxin (fdx).